Consider the following 517-residue polypeptide: UDP-N-acetylmuramyl-tripeptide synthetase (517 aa).

A UDP-N-acetyl-alpha-D-muramoyl-L-alanyl-D-glutamate-binding site is contributed by T48. Position 125–131 (G125–T131) interacts with ATP. Residues T169–T170, S196, and R204 contribute to the UDP-N-acetyl-alpha-D-muramoyl-L-alanyl-D-glutamate site. An N6-carboxylysine modification is found at K238.

This sequence belongs to the MurCDEF family. MurE subfamily. In terms of processing, carboxylation is probably crucial for Mg(2+) binding and, consequently, for the gamma-phosphate positioning of ATP.

It is found in the cytoplasm. It participates in cell wall biogenesis; peptidoglycan biosynthesis. In terms of biological role, catalyzes the addition of an amino acid to the nucleotide precursor UDP-N-acetylmuramoyl-L-alanyl-D-glutamate (UMAG) in the biosynthesis of bacterial cell-wall peptidoglycan. This Bifidobacterium longum (strain NCC 2705) protein is UDP-N-acetylmuramyl-tripeptide synthetase.